The primary structure comprises 475 residues: Ribulose bisphosphate carboxylase large chain (475 aa).

Residues 1 to 2 constitute a propeptide that is removed on maturation; it reads MS. Position 3 is an N-acetylproline (P3). N6,N6,N6-trimethyllysine is present on K14. Residues N123 and T173 each contribute to the substrate site. K175 (proton acceptor) is an active-site residue. A substrate-binding site is contributed by K177. Positions 201, 203, and 204 each coordinate Mg(2+). K201 carries the post-translational modification N6-carboxylysine. Residue H294 is the Proton acceptor of the active site. The substrate site is built by R295, H327, and S379.

It belongs to the RuBisCO large chain family. Type I subfamily. Heterohexadecamer of 8 large chains and 8 small chains; disulfide-linked. The disulfide link is formed within the large subunit homodimers. Mg(2+) serves as cofactor. The disulfide bond which can form in the large chain dimeric partners within the hexadecamer appears to be associated with oxidative stress and protein turnover.

It localises to the plastid. It is found in the chloroplast. The catalysed reaction is 2 (2R)-3-phosphoglycerate + 2 H(+) = D-ribulose 1,5-bisphosphate + CO2 + H2O. It catalyses the reaction D-ribulose 1,5-bisphosphate + O2 = 2-phosphoglycolate + (2R)-3-phosphoglycerate + 2 H(+). Functionally, ruBisCO catalyzes two reactions: the carboxylation of D-ribulose 1,5-bisphosphate, the primary event in carbon dioxide fixation, as well as the oxidative fragmentation of the pentose substrate in the photorespiration process. Both reactions occur simultaneously and in competition at the same active site. In Picea sitchensis (Sitka spruce), this protein is Ribulose bisphosphate carboxylase large chain.